Here is a 440-residue protein sequence, read N- to C-terminus: tRNA(Ile)-lysidine synthase (440 aa).

Residue 31–36 participates in ATP binding; the sequence is SGGADS.

It belongs to the tRNA(Ile)-lysidine synthase family.

Its subcellular location is the cytoplasm. The enzyme catalyses cytidine(34) in tRNA(Ile2) + L-lysine + ATP = lysidine(34) in tRNA(Ile2) + AMP + diphosphate + H(+). Ligates lysine onto the cytidine present at position 34 of the AUA codon-specific tRNA(Ile) that contains the anticodon CAU, in an ATP-dependent manner. Cytidine is converted to lysidine, thus changing the amino acid specificity of the tRNA from methionine to isoleucine. The protein is tRNA(Ile)-lysidine synthase of Borrelia garinii subsp. bavariensis (strain ATCC BAA-2496 / DSM 23469 / PBi) (Borreliella bavariensis).